The sequence spans 160 residues: UPF0178 protein XC_1827 (160 aa).

Belongs to the UPF0178 family.

This chain is UPF0178 protein XC_1827, found in Xanthomonas campestris pv. campestris (strain 8004).